Here is an 871-residue protein sequence, read N- to C-terminus: Alanine--tRNA ligase (871 aa).

4 residues coordinate Zn(2+): histidine 561, histidine 565, cysteine 665, and histidine 669.

This sequence belongs to the class-II aminoacyl-tRNA synthetase family. Zn(2+) is required as a cofactor.

It localises to the cytoplasm. It catalyses the reaction tRNA(Ala) + L-alanine + ATP = L-alanyl-tRNA(Ala) + AMP + diphosphate. In terms of biological role, catalyzes the attachment of alanine to tRNA(Ala) in a two-step reaction: alanine is first activated by ATP to form Ala-AMP and then transferred to the acceptor end of tRNA(Ala). Also edits incorrectly charged Ser-tRNA(Ala) and Gly-tRNA(Ala) via its editing domain. The polypeptide is Alanine--tRNA ligase (Dehalococcoides mccartyi (strain ATCC BAA-2266 / KCTC 15142 / 195) (Dehalococcoides ethenogenes (strain 195))).